We begin with the raw amino-acid sequence, 221 residues long: Lectin L6 (221 aa).

6 tandem repeats follow at residues 1–38, 39–75, 76–113, 114–150, 151–188, and 189–221. Positions 1 to 221 are 6 X approximate tandem repeats; sequence VQWHQIPGKL…NSVDNIYRSG (221 aa). Cys32 and Cys36 are disulfide-bonded. A disulfide bond links Cys108 and Cys112. Cysteines 183 and 187 form a disulfide.

It belongs to the tectonin family. In terms of tissue distribution, hemocytes.

It is found in the cytoplasmic vesicle. Its subcellular location is the secretory vesicle. Its function is as follows. Lipopolysaccharide-binding protein with Gram-negative antibacterial activity. Binds zinc and calcium. The sequence is that of Lectin L6 from Tachypleus tridentatus (Japanese horseshoe crab).